The following is a 786-amino-acid chain: Ribosome biogenesis protein BOP1 homolog (786 aa).

Over residues 1 to 11 (MAKKSAIKRKV) the composition is skewed to basic residues. A disordered region spans residues 1 to 161 (MAKKSAIKRK…NSDTSDEEDI (161 aa)). The segment covering 17–26 (INEQASVSEQ) has biased composition (polar residues). 3 stretches are compositionally biased toward acidic residues: residues 44–53 (EDTTDDEGID), 60–72 (TSDD…DEEG), and 82–114 (SGED…DDAK). The segment covering 122 to 135 (KATLSKTTGDSSNI) has biased composition (polar residues). The span at 141 to 150 (PRRDPSKPEY) shows a compositional bias: basic and acidic residues. The segment covering 151-160 (ENSDTSDEED) has biased composition (acidic residues). WD repeat units lie at residues 447 to 488 (GHTD…RTIE), 490 to 528 (NDVV…KLLV), 572 to 614 (THFK…SQIP), 617 to 655 (KSKG…LIKK), 658 to 697 (TNSK…KPYQ), 701 to 740 (LHRN…DLLQ), and 756 to 786 (RDEF…RLYT).

It belongs to the WD repeat BOP1/ERB1 family.

Its subcellular location is the nucleus. The protein resides in the nucleolus. The protein localises to the nucleoplasm. Required for maturation of ribosomal RNAs and formation of the large ribosomal subunit. This Drosophila grimshawi (Hawaiian fruit fly) protein is Ribosome biogenesis protein BOP1 homolog.